A 279-amino-acid chain; its full sequence is Large ribosomal subunit protein uL2 (279 aa).

The tract at residues 227–279 is disordered; that stretch reads GVAMNPVDHPMGGGEGKTSGGRHPVSPWGFPTKGKKTRDPNKLSSKFIKSKKR.

It belongs to the universal ribosomal protein uL2 family. As to quaternary structure, part of the 50S ribosomal subunit. Forms a bridge to the 30S subunit in the 70S ribosome.

Functionally, one of the primary rRNA binding proteins. Required for association of the 30S and 50S subunits to form the 70S ribosome, for tRNA binding and peptide bond formation. It has been suggested to have peptidyltransferase activity; this is somewhat controversial. Makes several contacts with the 16S rRNA in the 70S ribosome. This is Large ribosomal subunit protein uL2 from Neorickettsia sennetsu (strain ATCC VR-367 / Miyayama) (Ehrlichia sennetsu).